The chain runs to 362 residues: Phosphate acyltransferase (362 aa).

The segment at threonine 343–serine 362 is disordered. Positions lysine 344 to serine 356 are enriched in polar residues.

It belongs to the PlsX family. As to quaternary structure, homodimer. Probably interacts with PlsY.

It is found in the cytoplasm. The enzyme catalyses a fatty acyl-[ACP] + phosphate = an acyl phosphate + holo-[ACP]. It functions in the pathway lipid metabolism; phospholipid metabolism. Functionally, catalyzes the reversible formation of acyl-phosphate (acyl-PO(4)) from acyl-[acyl-carrier-protein] (acyl-ACP). This enzyme utilizes acyl-ACP as fatty acyl donor, but not acyl-CoA. The sequence is that of Phosphate acyltransferase from Aster yellows witches'-broom phytoplasma (strain AYWB).